Consider the following 1988-residue polypeptide: Protein Ycf2 (1988 aa).

1337–1344 lines the ATP pocket; sequence GSIGTGRS. The disordered stretch occupies residues 1377 to 1396; that stretch reads SDDDSDDIDDSGDIDDSDDI.

It belongs to the Ycf2 family.

It localises to the plastid. The protein resides in the chloroplast stroma. Probable ATPase of unknown function. Its presence in a non-photosynthetic plant (Epifagus virginiana) and experiments in tobacco indicate that it has an essential function which is probably not related to photosynthesis. The chain is Protein Ycf2 from Cucumis sativus (Cucumber).